Reading from the N-terminus, the 505-residue chain is ATP synthase subunit alpha (505 aa).

Position 170 to 177 (170 to 177 (GDRQTGKT)) interacts with ATP.

The protein belongs to the ATPase alpha/beta chains family. F-type ATPases have 2 components, CF(1) - the catalytic core - and CF(0) - the membrane proton channel. CF(1) has five subunits: alpha(3), beta(3), gamma(1), delta(1), epsilon(1). CF(0) has four main subunits: a(1), b(1), b'(1) and c(9-12).

It is found in the cellular thylakoid membrane. It carries out the reaction ATP + H2O + 4 H(+)(in) = ADP + phosphate + 5 H(+)(out). In terms of biological role, produces ATP from ADP in the presence of a proton gradient across the membrane. The alpha chain is a regulatory subunit. In Synechococcus sp. (strain ATCC 27144 / PCC 6301 / SAUG 1402/1) (Anacystis nidulans), this protein is ATP synthase subunit alpha.